Reading from the N-terminus, the 216-residue chain is V-type ATP synthase subunit D (216 aa).

It belongs to the V-ATPase D subunit family.

Functionally, produces ATP from ADP in the presence of a proton gradient across the membrane. The sequence is that of V-type ATP synthase subunit D from Clostridium botulinum (strain ATCC 19397 / Type A).